The sequence spans 428 residues: L-rhamnose isomerase (428 aa).

Positions 260, 292, and 294 each coordinate Mn(2+).

This sequence belongs to the rhamnose isomerase family. Mn(2+) serves as cofactor.

The protein localises to the cytoplasm. It carries out the reaction L-rhamnopyranose = L-rhamnulose. Its pathway is carbohydrate degradation; L-rhamnose degradation; glycerone phosphate from L-rhamnose: step 1/3. Functionally, catalyzes the interconversion of L-rhamnose and L-rhamnulose. This is L-rhamnose isomerase from Enterococcus faecalis (strain ATCC 700802 / V583).